The chain runs to 67 residues: UPF0434 protein RALTA_A0561 (67 aa).

It belongs to the UPF0434 family.

The sequence is that of UPF0434 protein RALTA_A0561 from Cupriavidus taiwanensis (strain DSM 17343 / BCRC 17206 / CCUG 44338 / CIP 107171 / LMG 19424 / R1) (Ralstonia taiwanensis (strain LMG 19424)).